Reading from the N-terminus, the 1009-residue chain is Membrane alanyl aminopeptidase (1009 aa).

Residues 1–15 form the signal peptide; sequence MAAIKLLVLSLACAC. Residues 16-52 constitute a propeptide, activation peptide; that stretch reads VIAHSPIPPASRTIFLDERLEGGAFENIDAFENIELS. 338–342 contributes to the substrate binding site; that stretch reads GAMEN. His374 contacts Zn(2+). Catalysis depends on Glu375, which acts as the Proton acceptor. Residues His378 and Glu397 each contribute to the Zn(2+) site. An N-linked (GlcNAc...) asparagine glycan is attached at Asn906. Residues 955–980 form a disordered region; it reads PSTSTTSTTAAPTTVTQPTITEPSTP. A lipid anchor (GPI-anchor amidated aspartate) is attached at Asp987. The propeptide at 988 to 1009 is removed in mature form; the sequence is SAMTSFASLFIISLGAILHLIL.

Belongs to the peptidase M1 family. Zn(2+) is required as a cofactor.

The protein localises to the cell membrane. Binds to the B.thuringiensis toxin, CryIA(C). The protein is Membrane alanyl aminopeptidase of Heliothis virescens (Tobacco budworm moth).